Reading from the N-terminus, the 1770-residue chain is Probable outer membrane protein PmpC (1770 aa).

A signal peptide spans M1 to A20. Disordered stretches follow at residues L73 to N109, E264 to G311, P481 to D505, E611 to E818, and L1271 to T1329. The segment covering S85–G97 has biased composition (low complexity). A compositionally biased stretch (polar residues) spans D268–S285. 2 stretches are compositionally biased toward low complexity: residues S294–P303 and Q496–D505. Composition is skewed to polar residues over residues T631–A675 and Q682–E703. Composition is skewed to low complexity over residues E719 to S748 and S762 to A802. The span at N1303–P1319 shows a compositional bias: polar residues. Residues E1477 to F1770 form the Autotransporter domain.

Belongs to the PMP outer membrane protein family.

It is found in the secreted. The protein resides in the cell wall. The protein localises to the cell outer membrane. The sequence is that of Probable outer membrane protein PmpC (pmpC) from Chlamydia trachomatis serovar D (strain ATCC VR-885 / DSM 19411 / UW-3/Cx).